Consider the following 914-residue polypeptide: Probable dipeptidyl-aminopeptidase B (914 aa).

Residues 1-10 (MATFSDHETS) show a composition bias toward basic and acidic residues. The tract at residues 1-63 (MATFSDHETS…TGMDNGDRYR (63 aa)) is disordered. Over 1-91 (MATFSDHETS…KAATGGRARR (91 aa)) the chain is Cytoplasmic. Over residues 20 to 35 (STSSASQTSSDSGLSS) the composition is skewed to low complexity. Over residues 45-56 (QPFSAPNGTTGM) the composition is skewed to polar residues. A helical; Signal-anchor for type II membrane protein membrane pass occupies residues 92 to 112 (IFWLLVLLCFGGWLLAFVLFL). Residues 113 to 914 (TGGRANYQSA…RFKRSLPVLV (802 aa)) lie on the Vacuolar side of the membrane. N-linked (GlcNAc...) asparagine glycosylation is found at asparagine 348, asparagine 565, and asparagine 639. Catalysis depends on serine 753, which acts as the Charge relay system. An N-linked (GlcNAc...) asparagine glycan is attached at asparagine 807. Active-site charge relay system residues include aspartate 830 and histidine 863.

Belongs to the peptidase S9B family.

The protein localises to the vacuole membrane. It carries out the reaction Release of an N-terminal dipeptide, Xaa-Yaa-|-Zaa-, from a polypeptide, preferentially when Yaa is Pro, provided Zaa is neither Pro nor hydroxyproline.. Type IV dipeptidyl-peptidase which removes N-terminal dipeptides sequentially from polypeptides having unsubstituted N-termini provided that the penultimate residue is proline. This is Probable dipeptidyl-aminopeptidase B (dapB) from Aspergillus clavatus (strain ATCC 1007 / CBS 513.65 / DSM 816 / NCTC 3887 / NRRL 1 / QM 1276 / 107).